The primary structure comprises 687 residues: Probable WRKY transcription factor 2 (687 aa).

Residues Y197–Y276 are disordered. 2 stretches are compositionally biased toward polar residues: residues N199 to Q208 and N219 to E249. The segment at residues A267–P331 is a DNA-binding region (WRKY 1). Zn(2+)-binding residues include C298, C303, H326, and H328. 2 disordered regions span residues G324–F384 and F416–R453. A compositionally biased stretch (polar residues) spans R354–E379. Residues Y435–G444 are compositionally biased toward gly residues. A DNA-binding region (WRKY 2) is located at residues S481 to P546. The Zn(2+) site is built by C512, C517, H541, and H543. A disordered region spans residues Y537–F599. Over residues H553 to G565 the composition is skewed to gly residues. Residues H578 to R589 are compositionally biased toward basic and acidic residues. Residues Q590 to F599 are compositionally biased toward polar residues.

Belongs to the WRKY group I family. Low expression in senescent leaves. Expressed in both the unfertilized egg cell and the pollen tube.

It localises to the nucleus. In terms of biological role, transcription factor. Regulates WOX8 and WOX9 expression and basal cell division patterns during early embryogenesis. Interacts specifically with the W box (5'-(T)TGAC[CT]-3'), a frequently occurring elicitor-responsive cis-acting element. Required to repolarize the zygote from a transient symmetric state. This chain is Probable WRKY transcription factor 2, found in Arabidopsis thaliana (Mouse-ear cress).